The primary structure comprises 127 residues: Large ribosomal subunit protein bL17 (127 aa).

This sequence belongs to the bacterial ribosomal protein bL17 family. In terms of assembly, part of the 50S ribosomal subunit. Contacts protein L32.

This chain is Large ribosomal subunit protein bL17, found in Enterococcus faecalis (strain ATCC 700802 / V583).